A 475-amino-acid chain; its full sequence is Secreted triacylglycerol lipase LIP5 (475 aa).

The first 19 residues, methionine 1–glycine 19, serve as a signal peptide directing secretion. A disulfide bridge connects residues cysteine 129 and cysteine 300. Residue serine 213 is the Nucleophile of the active site. Asparagine 246 and asparagine 312 each carry an N-linked (GlcNAc...) asparagine glycan. Residue aspartate 360 is part of the active site. Asparagine 369 carries an N-linked (GlcNAc...) asparagine glycan. Histidine 394 is an active-site residue. N-linked (GlcNAc...) asparagine glycosylation occurs at asparagine 471.

It belongs to the AB hydrolase superfamily. Lipase family. Class Lip subfamily.

It catalyses the reaction a triacylglycerol + H2O = a diacylglycerol + a fatty acid + H(+). It carries out the reaction a monoacylglycerol + H2O = glycerol + a fatty acid + H(+). The catalysed reaction is a diacylglycerol + H2O = a monoacylglycerol + a fatty acid + H(+). Its function is as follows. Secreted lipase involved in Dandruff and seborrheic dermatitis (D/SD) probably via lipase-mediated breakdown of sebaceous lipids and release of irritating free fatty acids. Has triacylglycerol lipase activity and is able to hydrolyze triolein. Mostly converts monoolein to di- and triolein, while free fatty acids are only produced in low amounts. This Malassezia globosa (strain ATCC MYA-4612 / CBS 7966) (Dandruff-associated fungus) protein is Secreted triacylglycerol lipase LIP5.